The sequence spans 456 residues: MSSRPQNIGIKAIELYFPSQYVDQVELEKFDGVSAGKYTIGLGQTKMSFCDDREDIYSFALTATSKLLKNYNIDPNSIGFLEVGTETLLDKSKSVKSVLMQLFGDNTNIEGVDTINACYGGTNAVFNAINWVESSAWDGRDAIVVAGDIALYAKGNARPTGGAGAVALLIGPNAPIVAEPGLRGTYMQHAYDFYKPDLTSEYPYVDGHYSVNCYSKALDAAYRAYCKREAKQANGTNGVTNGDASTKTGLDRFDYMAFHSPTCKLVQKSYARLLYHDYLANADSPVFAEVAPELRDMDYEKSLTDKVVEKTFMTLTKKRFQERVNPAIQVATNCGNMYCGSVWSGLASLISVVDNKDLEGKRIGLFSYGSGLAASFLSFRINGSVDKISDVLNIPSRLESRRAVPPETYDQMCDLRKQAHLQKDYTPKGDPSTILPGTYYLTKVDDMFKREYAIKE.

Ala35 provides a ligand contact to (3S)-3-hydroxy-3-methylglutaryl-CoA. Residue Glu86 is the Proton donor/acceptor of the active site. Residues Cys118, Asn156, Thr160, Ser210, His259, Lys268, Asn336, and Ser370 each contribute to the (3S)-3-hydroxy-3-methylglutaryl-CoA site. Catalysis depends on Cys118, which acts as the Acyl-thioester intermediate. The active-site Proton donor/acceptor is the His259.

The protein belongs to the thiolase-like superfamily. HMG-CoA synthase family.

The catalysed reaction is acetoacetyl-CoA + acetyl-CoA + H2O = (3S)-3-hydroxy-3-methylglutaryl-CoA + CoA + H(+). It participates in metabolic intermediate biosynthesis; (R)-mevalonate biosynthesis; (R)-mevalonate from acetyl-CoA: step 2/3. Hydroxymethylglutaryl-CoA synthase; part of the first module of ergosterol biosynthesis pathway that includes the early steps of the pathway, conserved across all eukaryotes, and which results in the formation of mevalonate from acetyl-coenzyme A (acetyl-CoA). ERG13 condenses acetyl-CoA with acetoacetyl-CoA to form hydroxymethylglutaryl-CoA (HMG-CoA). The first module starts with the action of the cytosolic acetyl-CoA acetyltransferase ERG10B that catalyzes the formation of acetoacetyl-CoA. The hydroxymethylglutaryl-CoA synthases ERG13 then condenses acetyl-CoA with acetoacetyl-CoA to form HMG-CoA. The rate-limiting step of the early module is the reduction to mevalonate by the 3-hydroxy-3-methylglutaryl-coenzyme A (HMG-CoA) reductases HMG1. This chain is Hydroxymethylglutaryl-CoA synthase ERG13, found in Gibberella zeae (strain ATCC MYA-4620 / CBS 123657 / FGSC 9075 / NRRL 31084 / PH-1) (Wheat head blight fungus).